A 92-amino-acid chain; its full sequence is Phospholemman (92 aa).

Positions 1-20 (MAPLHHILVLCVGFLTTATA) are cleaved as a signal peptide. Topologically, residues 21-35 (EAPQEHDPFTYDYQS) are extracellular. Residues 36–56 (LRIGGLIIAGILFILGILIVL) traverse the membrane as a helical segment. Over 57–92 (SRRCRCKFNQQQRTGEPDEEEGTFRSSIRRLSTRRR) the chain is Cytoplasmic. C60 carries the S-palmitoyl cysteine lipid modification. Position 62 is an S-glutathionyl cysteine; alternate (C62). C62 is lipidated: S-palmitoyl cysteine; alternate. Residues 65–92 (NQQQRTGEPDEEEGTFRSSIRRLSTRRR) form a disordered region. Position 79 is a phosphothreonine (T79). A Phosphoserine modification is found at S82. 2 positions are modified to phosphoserine; by PKA and PKC: S83 and S88. The span at 83 to 92 (SIRRLSTRRR) shows a compositional bias: basic residues. The residue at position 89 (T89) is a Phosphothreonine; by PKC.

Belongs to the FXYD family. Homotetramer. Monomer. Regulatory subunit of the sodium/potassium-transporting ATPase (NKA) which is composed of a catalytic alpha subunit, a non-catalytic beta subunit and an additional regulatory subunit. The monomeric form associates with NKA while the oligomeric form does not. Interacts with the catalytic alpha-1 subunit ATP1A1. Also interacts with the catalytic alpha-2 and alpha-3 subunits ATP1A2 and ATP1A3. Very little interaction with the alpha subunits ATP1A1, ATP1A2 or ATP1A3 when phosphorylated at Ser-83. Interacts with non-catalytic beta-1 subunit ATP1B1. Oxidative stress decreases interaction with ATP1A1 but increases interaction with ATP1B1. Major plasma membrane substrate for cAMP-dependent protein kinase (PKA) and protein kinase C (PKC) in several different tissues. Phosphorylated in response to insulin and adrenergic stimulation. Phosphorylation at Ser-88 stimulates sodium/potassium-transporting ATPase activity while the unphosphorylated form inhibits sodium/potassium-transporting ATPase activity. Phosphorylation increases tetramerization, decreases binding to ATP1A1 and reduces inhibition of ATP1A1 activity. Phosphorylation at Ser-83 leads to greatly reduced interaction with ATP1A1, ATP1A2 and ATP1A3. May be phosphorylated by DMPK. In terms of processing, palmitoylation increases half-life and stability and is enhanced upon phosphorylation at Ser-88 by PKA. As to expression, present in heart, esophagus, stomach, aorta, skeletal muscle, smooth muscle, and liver but absent from brain and kidney.

Its subcellular location is the cell membrane. It is found in the sarcolemma. The protein localises to the apical cell membrane. The protein resides in the membrane. It localises to the caveola. Its subcellular location is the T-tubule. Its function is as follows. Associates with and regulates the activity of the sodium/potassium-transporting ATPase (NKA) which transports Na(+) out of the cell and K(+) into the cell. Inhibits NKA activity in its unphosphorylated state and stimulates activity when phosphorylated. Reduces glutathionylation of the NKA beta-1 subunit ATP1B1, thus reversing glutathionylation-mediated inhibition of ATP1B1. Contributes to female sexual development by maintaining the excitability of neurons which secrete gonadotropin-releasing hormone. In Canis lupus familiaris (Dog), this protein is Phospholemman.